The chain runs to 692 residues: Elongation factor G (692 aa).

One can recognise a tr-type G domain in the interval 8-283 (EDYRNFGIMA…AVVDYLPSPV (276 aa)). GTP is bound by residues 17–24 (AHIDAGKT), 81–85 (DTPGH), and 135–138 (NKMD).

This sequence belongs to the TRAFAC class translation factor GTPase superfamily. Classic translation factor GTPase family. EF-G/EF-2 subfamily.

The protein resides in the cytoplasm. Catalyzes the GTP-dependent ribosomal translocation step during translation elongation. During this step, the ribosome changes from the pre-translocational (PRE) to the post-translocational (POST) state as the newly formed A-site-bound peptidyl-tRNA and P-site-bound deacylated tRNA move to the P and E sites, respectively. Catalyzes the coordinated movement of the two tRNA molecules, the mRNA and conformational changes in the ribosome. This Caulobacter vibrioides (strain ATCC 19089 / CIP 103742 / CB 15) (Caulobacter crescentus) protein is Elongation factor G.